A 265-amino-acid chain; its full sequence is S-adenosylmethionine decarboxylase proenzyme (265 aa).

The active-site Schiff-base intermediate with substrate; via pyruvic acid is Ser114. Ser114 carries the pyruvic acid (Ser); by autocatalysis modification. Residue His119 is the Proton acceptor; for processing activity of the active site. Residue Cys142 is the Proton donor; for catalytic activity of the active site.

It belongs to the prokaryotic AdoMetDC family. Type 2 subfamily. In terms of assembly, heterooctamer of four alpha and four beta chains arranged as a tetramer of alpha/beta heterodimers. Pyruvate serves as cofactor. Is synthesized initially as an inactive proenzyme. Formation of the active enzyme involves a self-maturation process in which the active site pyruvoyl group is generated from an internal serine residue via an autocatalytic post-translational modification. Two non-identical subunits are generated from the proenzyme in this reaction, and the pyruvate is formed at the N-terminus of the alpha chain, which is derived from the carboxyl end of the proenzyme. The post-translation cleavage follows an unusual pathway, termed non-hydrolytic serinolysis, in which the side chain hydroxyl group of the serine supplies its oxygen atom to form the C-terminus of the beta chain, while the remainder of the serine residue undergoes an oxidative deamination to produce ammonia and the pyruvoyl group blocking the N-terminus of the alpha chain.

The enzyme catalyses S-adenosyl-L-methionine + H(+) = S-adenosyl 3-(methylsulfanyl)propylamine + CO2. Its pathway is amine and polyamine biosynthesis; S-adenosylmethioninamine biosynthesis; S-adenosylmethioninamine from S-adenosyl-L-methionine: step 1/1. In terms of biological role, catalyzes the decarboxylation of S-adenosylmethionine to S-adenosylmethioninamine (dcAdoMet), the propylamine donor required for the synthesis of the polyamines spermine and spermidine from the diamine putrescine. This is S-adenosylmethionine decarboxylase proenzyme from Buchnera aphidicola subsp. Acyrthosiphon pisum (strain APS) (Acyrthosiphon pisum symbiotic bacterium).